We begin with the raw amino-acid sequence, 417 residues long: Gap junction alpha-3 protein (417 aa).

An intramembrane segment occupies Gly2–Gln15. At Glu16–Thr19 the chain is on the cytoplasmic side. A helical transmembrane segment spans residues Val20–Ala40. The Extracellular portion of the chain corresponds to Ala41–Pro71. Disulfide bonds link Cys54–Cys198, Cys61–Cys192, and Cys65–Cys187. Residues Ile72–Tyr92 traverse the membrane as a helical segment. Topologically, residues Leu93–Asn158 are cytoplasmic. Basic and acidic residues predominate over residues Glu110 to Met128. The tract at residues Glu110 to Asp141 is disordered. The helical transmembrane segment at Ile159 to Phe179 threads the bilayer. Residues Gln180 to Thr207 are Extracellular-facing. Residues Ile208–Ile228 traverse the membrane as a helical segment. Over Tyr229–Ile417 the chain is Cytoplasmic. 2 disordered regions span residues Asp247–Pro267 and Arg334–Ile417. Residues Pro342–Pro353 show a composition bias toward low complexity.

It belongs to the connexin family. Alpha-type (group II) subfamily. A hemichannel or connexon is composed of a hexamer of connexins. A functional gap junction is formed by the apposition of two hemichannels. Forms heteromeric channels with GJA8.

It is found in the cell membrane. It localises to the cell junction. The protein localises to the gap junction. Its function is as follows. Structural component of lens fiber gap junctions. Gap junctions are dodecameric channels that connect the cytoplasm of adjoining cells. They are formed by the docking of two hexameric hemichannels, one from each cell membrane. Small molecules and ions diffuse from one cell to a neighboring cell via the central pore. In Mus musculus (Mouse), this protein is Gap junction alpha-3 protein (Gja3).